Reading from the N-terminus, the 287-residue chain is Probable endonuclease 4 (287 aa).

Positions 69, 109, 144, 178, 181, 215, 228, 230, and 260 each coordinate Zn(2+).

This sequence belongs to the AP endonuclease 2 family. Requires Zn(2+) as cofactor.

It carries out the reaction Endonucleolytic cleavage to 5'-phosphooligonucleotide end-products.. Endonuclease IV plays a role in DNA repair. It cleaves phosphodiester bonds at apurinic or apyrimidinic (AP) sites, generating a 3'-hydroxyl group and a 5'-terminal sugar phosphate. This Thermotoga sp. (strain RQ2) protein is Probable endonuclease 4.